A 629-amino-acid chain; its full sequence is RNA polymerase sigma factor RpoD (629 aa).

A disordered region spans residues histidine 183–isoleucine 228. Positions aspartate 187–isoleucine 228 are enriched in acidic residues. Residues methionine 395–threonine 465 form a sigma-70 factor domain-2 region. The Interaction with polymerase core subunit RpoC signature appears at aspartate 419–glutamine 422. Residues glutamate 474 to serine 550 form a sigma-70 factor domain-3 region. A sigma-70 factor domain-4 region spans residues valine 563–histidine 616. Residues leucine 589–alanine 608 constitute a DNA-binding region (H-T-H motif).

It belongs to the sigma-70 factor family. RpoD/SigA subfamily. As to quaternary structure, interacts transiently with the RNA polymerase catalytic core.

It is found in the cytoplasm. Functionally, sigma factors are initiation factors that promote the attachment of RNA polymerase to specific initiation sites and are then released. This sigma factor is the primary sigma factor during exponential growth. This is RNA polymerase sigma factor RpoD from Haemophilus influenzae (strain ATCC 51907 / DSM 11121 / KW20 / Rd).